The primary structure comprises 264 residues: Intermembrane phospholipid transport system ATP-binding protein MlaF (264 aa).

The ABC transporter domain maps to 6-242 (IEVKNLTFKR…QDLRVVQFLK (237 aa)). 38-45 (GPSGIGKT) contributes to the ATP binding site.

It belongs to the ABC transporter superfamily. MlaF family. The complex is composed of two ATP-binding proteins (MlaF), two transmembrane proteins (MlaE), two cytoplasmic solute-binding proteins (MlaB) and six periplasmic solute-binding proteins (MlaD).

The protein localises to the cell inner membrane. Its function is as follows. Part of the ABC transporter complex MlaFEDB, which is involved in a phospholipid transport pathway that maintains lipid asymmetry in the outer membrane by retrograde trafficking of phospholipids from the outer membrane to the inner membrane. Responsible for energy coupling to the transport system. The chain is Intermembrane phospholipid transport system ATP-binding protein MlaF from Haemophilus influenzae (strain ATCC 51907 / DSM 11121 / KW20 / Rd).